Here is a 78-residue protein sequence, read N- to C-terminus: DNA-directed RNA polymerase subunit Rpo5 (78 aa).

This sequence belongs to the archaeal Rpo5/eukaryotic RPB5 RNA polymerase subunit family. In terms of assembly, part of the RNA polymerase complex.

Its subcellular location is the cytoplasm. It carries out the reaction RNA(n) + a ribonucleoside 5'-triphosphate = RNA(n+1) + diphosphate. Its function is as follows. DNA-dependent RNA polymerase (RNAP) catalyzes the transcription of DNA into RNA using the four ribonucleoside triphosphates as substrates. The polypeptide is DNA-directed RNA polymerase subunit Rpo5 (Methanosarcina barkeri (strain Fusaro / DSM 804)).